A 613-amino-acid polypeptide reads, in one-letter code: tRNA (uracil-5-)-methyltransferase homolog A (613 aa).

The segment at 1-46 (MSEPAAEVPEPMEDCGQDASAVPSSAAPLCQKEEAGPGPAAGPGTQ) is disordered. The RRM domain maps to 63-136 (FKLELQNVPR…CPLSVRLARP (74 aa)). Residues 170 to 200 (YTEQLEQKRLECERVLQKLAKEIGNTNRALL) adopt a coiled-coil conformation. Phosphoserine is present on S368. S-adenosyl-L-methionine is bound by residues Q401, E451, and D500. Catalysis depends on C528, which acts as the Nucleophile. The active-site Proton acceptor is the E571.

Belongs to the class I-like SAM-binding methyltransferase superfamily. RNA M5U methyltransferase family. In terms of tissue distribution, widely expressed at low level. Expressed at higher level in proliferating cells.

The protein localises to the cytoplasm. The protein resides in the cytosol. The catalysed reaction is uridine(54) in tRNA + S-adenosyl-L-methionine = 5-methyluridine(54) in tRNA + S-adenosyl-L-homocysteine + H(+). It carries out the reaction a uridine in mRNA + S-adenosyl-L-methionine = a 5-methyluridine in mRNA + S-adenosyl-L-homocysteine + H(+). In terms of biological role, S-adenosyl-L-methionine-dependent methyltransferase that catalyzes the formation of 5-methyl-uridine in tRNAs and some mRNAs. Mainly catalyzes the methylation of uridine at position 54 (m5U54) in cytosolic tRNAs. Also able to mediate the formation of 5-methyl-uridine in some mRNAs. This is tRNA (uracil-5-)-methyltransferase homolog A from Mus musculus (Mouse).